The chain runs to 424 residues: Hemagglutinin-esterase (424 aa).

An N-terminal signal peptide occupies residues 1 to 16 (MFLLPRFVLVSCIIGS). Positions 7–127 (FVLVSCIIGS…SNDIWMQNKG (121 aa)) are esterase domain 1. Residues 17-392 (LGFDNPPTNV…PICVYDPLPI (376 aa)) lie on the Virion surface side of the membrane. Ser40 (nucleophile) is an active-site residue. Cysteines 44 and 65 form a disulfide. N-linked (GlcNAc...) asparagine; by host glycans are attached at residues Asn54, Asn89, Asn153, Asn236, and Asn301. 3 disulfides stabilise this stretch: Cys113–Cys162, Cys197–Cys276, and Cys205–Cys249. The receptor binding stretch occupies residues 128 to 266 (LFYTQVYKNM…GNYLAISNEL (139 aa)). Residues 267–379 (LLTVPTKAIC…RCPTAADINT (113 aa)) form an esterase domain 2 region. Residues Cys307 and Cys312 are joined by a disulfide bond. Residue Asn316 is glycosylated (N-linked (GlcNAc...) asparagine; by host). Active-site charge relay system residues include Asp326 and His329. A disulfide bond links Cys347 and Cys371. N-linked (GlcNAc...) asparagine; by host glycosylation is present at Asn358. Residues 393 to 413 (ILLGILLSVAVIIIVVLLLYF) form a helical membrane-spanning segment. Topologically, residues 414–424 (MVDNGTRLHDA) are intravirion. A glycan (N-linked (GlcNAc...) asparagine; by host) is linked at Asn417.

It belongs to the influenza type C/coronaviruses hemagglutinin-esterase family. In terms of assembly, homodimer; disulfide-linked. Forms a complex with the M protein in the pre-Golgi. Associates then with S-M complex to form a ternary complex S-M-HE. Post-translationally, N-glycosylated in the host RER.

The protein resides in the virion membrane. It is found in the host cell membrane. It carries out the reaction N-acetyl-9-O-acetylneuraminate + H2O = N-acetylneuraminate + acetate + H(+). It catalyses the reaction N-acetyl-4-O-acetylneuraminate + H2O = N-acetylneuraminate + acetate + H(+). Functionally, structural protein that makes short spikes at the surface of the virus. Contains receptor binding and receptor-destroying activities. Mediates de-O-acetylation of N-acetyl-4-O-acetylneuraminic acid, which is probably the receptor determinant recognized by the virus on the surface of erythrocytes and susceptible cells. This receptor-destroying activity is important for virus release as it probably helps preventing self-aggregation and ensures the efficient spread of the progeny virus from cell to cell. May serve as a secondary viral attachment protein for initiating infection, the spike protein being the major one. May become a target for both the humoral and the cellular branches of the immune system. This Bos taurus (Bovine) protein is Hemagglutinin-esterase.